The sequence spans 360 residues: Hyaluronan and proteoglycan link protein 3 (360 aa).

The first 17 residues, Met-1–Gly-17, serve as a signal peptide directing secretion. Residues Lys-48 to Arg-164 enclose the Ig-like V-type domain. 5 disulfide bridges follow: Cys-70-Cys-146, Cys-188-Cys-259, Cys-212-Cys-233, Cys-286-Cys-356, and Cys-311-Cys-332. 2 Link domains span residues Val-166 to Ala-261 and Gly-266 to Arg-358.

It belongs to the HAPLN family. Widely expressed with highest levels in spleen and placenta.

Its subcellular location is the secreted. It localises to the extracellular space. The protein resides in the extracellular matrix. Functionally, may function in hyaluronic acid binding. The polypeptide is Hyaluronan and proteoglycan link protein 3 (HAPLN3) (Homo sapiens (Human)).